A 290-amino-acid polypeptide reads, in one-letter code: N-acetylmannosamine kinase (290 aa).

ATP is bound by residues 5-12 (AIDIGGTK) and 132-139 (GVGGGVVS). Residues H156, C166, C168, and C173 each coordinate Zn(2+).

This sequence belongs to the ROK (NagC/XylR) family. NanK subfamily. In terms of assembly, homodimer.

The catalysed reaction is an N-acyl-D-mannosamine + ATP = an N-acyl-D-mannosamine 6-phosphate + ADP + H(+). Its pathway is amino-sugar metabolism; N-acetylneuraminate degradation; D-fructose 6-phosphate from N-acetylneuraminate: step 2/5. In terms of biological role, catalyzes the phosphorylation of N-acetylmannosamine (ManNAc) to ManNAc-6-P. This Citrobacter koseri (strain ATCC BAA-895 / CDC 4225-83 / SGSC4696) protein is N-acetylmannosamine kinase.